Reading from the N-terminus, the 231-residue chain is Probable transglycosylase SceD (231 aa).

The first 27 residues, 1-27 (MKKTLLASSLAVGLGIVAGNAGHEAHA), serve as a signal peptide directing secretion. Residues 93–153 (SAQAPATNNV…ESKASEGSSV (61 aa)) are disordered. Residues 96–116 (APATNNVAPSADQANQVQSQE) show a composition bias toward polar residues. The span at 119–137 (APQNAQTQQPQASTSNNSQ) shows a compositional bias: low complexity. A compositionally biased stretch (polar residues) spans 138–153 (VTATPTESKASEGSSV).

This sequence belongs to the transglycosylase family. SceD subfamily.

Its subcellular location is the secreted. Its function is as follows. Is able to cleave peptidoglycan and affects clumping and separation of bacterial cells. The sequence is that of Probable transglycosylase SceD (sceD) from Staphylococcus aureus (strain bovine RF122 / ET3-1).